We begin with the raw amino-acid sequence, 229 residues long: Cytidylate kinase (229 aa).

12 to 20 lines the ATP pocket; it reads GPSGSGKGT.

The protein belongs to the cytidylate kinase family. Type 1 subfamily.

The protein resides in the cytoplasm. The catalysed reaction is CMP + ATP = CDP + ADP. The enzyme catalyses dCMP + ATP = dCDP + ADP. This Pseudomonas syringae pv. syringae (strain B728a) protein is Cytidylate kinase.